A 235-amino-acid polypeptide reads, in one-letter code: MAVELGVLLVRPRPGTGLGRVMRTLLLVLWLATRGSALYFHIGETEKKCFIEEIPDETMVIGNYRTQLYDKQREEYQPATPGLGMFVEVKDPEDKVILARQYGSEGRFTFTSHTPGEHQICLHSNSTKFSLFAGGMLRVHLDIQVGEHANDYAEIAAKDKLSELQLRVRQLVEQVEQIQKEQNYQRWREERFRQTSESTNQRVLWWSILQTLILVAIGVWQMRHLKSFFEAKKLV.

A signal peptide spans 1 to 37 (MAVELGVLLVRPRPGTGLGRVMRTLLLVLWLATRGSA). Topologically, residues 38 to 202 (LYFHIGETEK…RQTSESTNQR (165 aa)) are lumenal. The 99-residue stretch at 47–145 (KKCFIEEIPD…MLRVHLDIQV (99 aa)) folds into the GOLD domain. A required for interaction with STX17 region spans residues 121–160 (CLHSNSTKFSLFAGGMLRVHLDIQVGEHANDYAEIAAKDK). Asn-125 carries N-linked (GlcNAc...) asparagine glycosylation. Positions 154-184 (EIAAKDKLSELQLRVRQLVEQVEQIQKEQNY) form a coiled coil. At Lys-160 the chain carries N6-acetyllysine. A helical transmembrane segment spans residues 203–222 (VLWWSILQTLILVAIGVWQM). At 223-235 (RHLKSFFEAKKLV) the chain is on the cytoplasmic side. The short motif at 228-229 (FF) is the COPII vesicle coat-binding element. The COPI vesicle coat-binding signature appears at 228 to 235 (FFEAKKLV).

This sequence belongs to the EMP24/GP25L family. In terms of assembly, monomer and homodimer in endoplasmic reticulum. Predominantly monomeric and to lesser extent homodimeric in endoplasmic reticulum-Golgi intermediate compartment and cis-Golgi network. Probably oligomerizes with other members of the EMP24/GP25L family such as TMED2, TMED7 and TMED10. Interacts with TMED5. Interacts (via C-terminus) with COPG1; the interaction involves dimeric TMED9. Interacts with PTPN2 and SPAST. Interacts with STX17; the interaction is direct. In terms of processing, N-linked glycosylated containing high mannose.

It localises to the endoplasmic reticulum membrane. Its subcellular location is the golgi apparatus. The protein localises to the cis-Golgi network membrane. It is found in the endoplasmic reticulum-Golgi intermediate compartment membrane. The protein resides in the trans-Golgi network membrane. In terms of biological role, appears to be involved in vesicular protein trafficking, mainly in the early secretory pathway. In COPI vesicle-mediated retrograde transport involved in the coatomer recruitment to membranes of the early secretory pathway. Increases coatomer-dependent activity of ARFGAP2. Thought to play a crucial role in the specific retention of p24 complexes in cis-Golgi membranes; specifically contributes to the coupled localization of TMED2 and TMED10 in the cis-Golgi network. May be involved in organization of intracellular membranes, such as of the ER-Golgi intermediate compartment and the Golgi apparatus. Involved in ER localization of PTPN2 isoform PTPB. The chain is Transmembrane emp24 domain-containing protein 9 (TMED9) from Homo sapiens (Human).